Here is a 110-residue protein sequence, read N- to C-terminus: UPF0145 protein (110 aa).

The protein belongs to the UPF0145 family.

The protein is UPF0145 protein of Listeria ivanovii.